We begin with the raw amino-acid sequence, 123 residues long: uncharacterized protein (123 aa).

The segment at 34-123 is disordered; sequence PEKISQTVKK…MNRDGGVKKE (90 aa). Basic and acidic residues-rich tracts occupy residues 50-60, 74-100, and 107-123; these read KKIDENKDKSP, TAKD…EFSQ, and EETR…VKKE.

The protein resides in the mitochondrion. This is an uncharacterized protein from Schizosaccharomyces pombe (strain 972 / ATCC 24843) (Fission yeast).